Here is a 214-residue protein sequence, read N- to C-terminus: Large ribosomal subunit protein uL3 (214 aa).

Gln-155 bears the N5-methylglutamine mark.

The protein belongs to the universal ribosomal protein uL3 family. As to quaternary structure, part of the 50S ribosomal subunit. Forms a cluster with proteins L14 and L19. Methylated by PrmB.

In terms of biological role, one of the primary rRNA binding proteins, it binds directly near the 3'-end of the 23S rRNA, where it nucleates assembly of the 50S subunit. The chain is Large ribosomal subunit protein uL3 from Acinetobacter baumannii (strain ACICU).